Here is a 234-residue protein sequence, read N- to C-terminus: Ribonuclease 3 (234 aa).

Residues 4-133 enclose the RNase III domain; it reads LLDLEHKLNY…ILGAVYIDSN (130 aa). E46 is a Mg(2+) binding site. D50 is an active-site residue. The Mg(2+) site is built by D119 and E122. Residue E122 is part of the active site. Residues 160–228 enclose the DRBM domain; it reads DFKSILQEYV…AKALCIKLGV (69 aa).

It belongs to the ribonuclease III family. As to quaternary structure, homodimer. Mg(2+) is required as a cofactor.

The protein resides in the cytoplasm. It carries out the reaction Endonucleolytic cleavage to 5'-phosphomonoester.. In terms of biological role, digests double-stranded RNA. Involved in the processing of primary rRNA transcript to yield the immediate precursors to the large and small rRNAs (23S and 16S). Processes some mRNAs, and tRNAs when they are encoded in the rRNA operon. Processes pre-crRNA and tracrRNA of type II CRISPR loci if present in the organism. This Fusobacterium nucleatum subsp. nucleatum (strain ATCC 25586 / DSM 15643 / BCRC 10681 / CIP 101130 / JCM 8532 / KCTC 2640 / LMG 13131 / VPI 4355) protein is Ribonuclease 3.